The following is a 193-amino-acid chain: Rho-related protein racF2 (193 aa).

Residue 10–17 (GDGAVGKT) coordinates GTP. The Effector region motif lies at 32–40 (YLPTVFDNY). GTP contacts are provided by residues 57–61 (DTAGQ) and 115–118 (TKQD). The residue at position 190 (Cys190) is a Cysteine methyl ester. Residue Cys190 is the site of S-geranylgeranyl cysteine attachment. Positions 191–193 (TIM) are cleaved as a propeptide — removed in mature form.

Belongs to the small GTPase superfamily. Rho family.

It localises to the cell membrane. The sequence is that of Rho-related protein racF2 (racF2) from Dictyostelium discoideum (Social amoeba).